A 1041-amino-acid polypeptide reads, in one-letter code: Importin-9 (1041 aa).

N-acetylalanine is present on alanine 2. Residues alanine 43–glutamate 119 form the Importin N-terminal domain. Residues glutamine 936–glycine 967 are disordered. The span at serine 943 to glycine 964 shows a compositional bias: acidic residues.

Belongs to the importin beta family. Interacts with histones H2A, H2B, H3 and H4. The binding is coupled to RanGTP cycles. Interacts with AKIRIN2; promoting association with pre-assembled proteasomes. Associates with pre-assembled proteasomes; interaction is indirect and mediated via interaction with AKIRIN2. Interacts with PPP2R1A and PPP2R1B.

It localises to the cytoplasm. The protein localises to the nucleus. In terms of biological role, nuclear transport receptor that mediates nuclear import of proteins, such as histones, proteasome and actin. Serves as receptor for nuclear localization signals (NLS) in cargo substrates. Is thought to mediate docking of the importin/substrate complex to the nuclear pore complex (NPC) through binding to nucleoporin and the complex is subsequently translocated through the pore by an energy requiring, Ran-dependent mechanism. At the nucleoplasmic side of the NPC, Ran binds to the importin, the importin/substrate complex dissociates and importin is re-exported from the nucleus to the cytoplasm where GTP hydrolysis releases Ran. The directionality of nuclear import is thought to be conferred by an asymmetric distribution of the GTP- and GDP-bound forms of Ran between the cytoplasm and nucleus. Mediates the import of pre-assembled proteasomes into the nucleus; AKIRIN2 acts as a molecular bridge between IPO9 and the proteasome complex. Mediates the nuclear import of histones H2A, H2B, H4 and H4. In addition to nuclear import, also acts as a chaperone for histones by preventing inappropriate non-nucleosomal interactions. Mediates the nuclear import of actin. In Homo sapiens (Human), this protein is Importin-9.